Reading from the N-terminus, the 69-residue chain is Small, acid-soluble spore protein A (69 aa).

Belongs to the alpha/beta-type SASP family.

Its function is as follows. SASP are bound to spore DNA. They are double-stranded DNA-binding proteins that cause DNA to change to an a-like conformation. They protect the DNA backbone from chemical and enzymatic cleavage and are thus involved in dormant spore's high resistance to UV light. The sequence is that of Small, acid-soluble spore protein A (sspA) from Bacillus subtilis (strain 168).